A 156-amino-acid chain; its full sequence is ATP synthase subunit b (156 aa).

Residues 5–25 (VTLIGQTVAFIIFVWFCMKFV) form a helical membrane-spanning segment.

It belongs to the ATPase B chain family. In terms of assembly, F-type ATPases have 2 components, F(1) - the catalytic core - and F(0) - the membrane proton channel. F(1) has five subunits: alpha(3), beta(3), gamma(1), delta(1), epsilon(1). F(0) has three main subunits: a(1), b(2) and c(10-14). The alpha and beta chains form an alternating ring which encloses part of the gamma chain. F(1) is attached to F(0) by a central stalk formed by the gamma and epsilon chains, while a peripheral stalk is formed by the delta and b chains.

The protein localises to the cell inner membrane. Its function is as follows. F(1)F(0) ATP synthase produces ATP from ADP in the presence of a proton or sodium gradient. F-type ATPases consist of two structural domains, F(1) containing the extramembraneous catalytic core and F(0) containing the membrane proton channel, linked together by a central stalk and a peripheral stalk. During catalysis, ATP synthesis in the catalytic domain of F(1) is coupled via a rotary mechanism of the central stalk subunits to proton translocation. Component of the F(0) channel, it forms part of the peripheral stalk, linking F(1) to F(0). The protein is ATP synthase subunit b of Shewanella loihica (strain ATCC BAA-1088 / PV-4).